A 61-amino-acid chain; its full sequence is MATVAMINKAKATPKYATRRYNRCGVCGRPRGYMRRFQLCRLCFRKLASEGQIPGVTKSSW.

Zn(2+)-binding residues include cysteine 24, cysteine 27, cysteine 40, and cysteine 43.

Belongs to the universal ribosomal protein uS14 family. Zinc-binding uS14 subfamily. In terms of assembly, part of the 30S ribosomal subunit. Contacts proteins S3 and S10. It depends on Zn(2+) as a cofactor.

Binds 16S rRNA, required for the assembly of 30S particles and may also be responsible for determining the conformation of the 16S rRNA at the A site. This Treponema pallidum (strain Nichols) protein is Small ribosomal subunit protein uS14.